Consider the following 400-residue polypeptide: Elongation factor Tu 2 (400 aa).

One can recognise a tr-type G domain in the interval 10–209 (KPHVNIGTIG…AVDEYIPTPQ (200 aa)). A G1 region spans residues 19–26 (GHVDHGKT). 19–26 (GHVDHGKT) contributes to the GTP binding site. A Mg(2+)-binding site is contributed by T26. The G2 stretch occupies residues 60-64 (GITIN). Residues 81–84 (DCPG) are G3. GTP-binding positions include 81-85 (DCPGH) and 136-139 (NKAD). Positions 136 to 139 (NKAD) are G4. The G5 stretch occupies residues 174 to 176 (SAL).

Belongs to the TRAFAC class translation factor GTPase superfamily. Classic translation factor GTPase family. EF-Tu/EF-1A subfamily. As to quaternary structure, monomer.

The protein localises to the cytoplasm. It carries out the reaction GTP + H2O = GDP + phosphate + H(+). GTP hydrolase that promotes the GTP-dependent binding of aminoacyl-tRNA to the A-site of ribosomes during protein biosynthesis. The protein is Elongation factor Tu 2 of Pelotomaculum thermopropionicum (strain DSM 13744 / JCM 10971 / SI).